A 409-amino-acid chain; its full sequence is NADH-quinone oxidoreductase subunit D (409 aa).

This sequence belongs to the complex I 49 kDa subunit family. NDH-1 is composed of 14 different subunits. Subunits NuoB, C, D, E, F, and G constitute the peripheral sector of the complex.

The protein resides in the cell inner membrane. The catalysed reaction is a quinone + NADH + 5 H(+)(in) = a quinol + NAD(+) + 4 H(+)(out). Its function is as follows. NDH-1 shuttles electrons from NADH, via FMN and iron-sulfur (Fe-S) centers, to quinones in the respiratory chain. The immediate electron acceptor for the enzyme in this species is believed to be ubiquinone. Couples the redox reaction to proton translocation (for every two electrons transferred, four hydrogen ions are translocated across the cytoplasmic membrane), and thus conserves the redox energy in a proton gradient. In Helicobacter hepaticus (strain ATCC 51449 / 3B1), this protein is NADH-quinone oxidoreductase subunit D.